Here is a 289-residue protein sequence, read N- to C-terminus: Diaminopimelate epimerase (289 aa).

Residues N13, Q47, and N67 each coordinate substrate. C76 (proton donor) is an active-site residue. Substrate is bound by residues 77–78 (GN), N167, N200, and 218–219 (ER). The active-site Proton acceptor is C227. 228–229 (GT) provides a ligand contact to substrate.

This sequence belongs to the diaminopimelate epimerase family. In terms of assembly, homodimer.

The protein resides in the cytoplasm. The catalysed reaction is (2S,6S)-2,6-diaminopimelate = meso-2,6-diaminopimelate. The protein operates within amino-acid biosynthesis; L-lysine biosynthesis via DAP pathway; DL-2,6-diaminopimelate from LL-2,6-diaminopimelate: step 1/1. Functionally, catalyzes the stereoinversion of LL-2,6-diaminopimelate (L,L-DAP) to meso-diaminopimelate (meso-DAP), a precursor of L-lysine and an essential component of the bacterial peptidoglycan. The chain is Diaminopimelate epimerase from Burkholderia pseudomallei (strain K96243).